Here is a 349-residue protein sequence, read N- to C-terminus: Quinone oxidoreductase-like protein 2 (349 aa).

K35 carries the N6-acetyllysine modification. K200 is modified (N6-succinyllysine).

The protein belongs to the zinc-containing alcohol dehydrogenase family. Quinone oxidoreductase subfamily.

This chain is Quinone oxidoreductase-like protein 2, found in Bos taurus (Bovine).